Reading from the N-terminus, the 369-residue chain is Dof zinc finger protein DOF2.5 (369 aa).

The segment at 80 to 134 (LNCPRCNSTNTKFCYYNNYSLTQPRYFCKGCRRYWTEGGSLRNVPVGGSSRKNKR) adopts a Dof-type zinc-finger fold. Positions 82, 85, 107, and 110 each coordinate Zn(2+). Disordered stretches follow at residues 120-149 (LRNVPVGGSSRKNKRSSSSSSSNILQTIPS), 203-224 (EGNGNITHQQQPSSSSSVYGSS), 284-304 (TDHQGLGHNSNNRSEALHSDH), and 322-369 (SSSI…GSSW). Positions 214 to 224 (PSSSSSVYGSS) are enriched in low complexity. Polar residues predominate over residues 284-297 (TDHQGLGHNSNNRS). A compositionally biased stretch (low complexity) spans 342 to 362 (NNNNNNNSSPNNGYWSGMFST).

As to expression, expressed in the vascular system of the mother plant, but not present in the seed and embryo. In maturing siliques, found all through the funiculus connecting the placenta to the ovule, but not in the ovule.

It localises to the nucleus. Its function is as follows. Transcription factor specifically involved in the maternal control of seed germination. Regulates transcription by binding to a 5'-AA[AG]G-3' consensus core sequence. May ensure the activation of a component that would trigger germination as a consequence of red light perception. In Arabidopsis thaliana (Mouse-ear cress), this protein is Dof zinc finger protein DOF2.5 (DOF2.5).